The following is a 48-amino-acid chain: Cytochrome c oxidase subunit 2 (48 aa).

Residues 1–14 (MAHPAQLGLQDASS) lie on the Mitochondrial intermembrane side of the membrane. Residues 15–45 (PIXEELLHFHEDALMIVFLISTLVLYIITTT) traverse the membrane as a helical segment. The Mitochondrial matrix portion of the chain corresponds to 46–48 (VST).

Belongs to the cytochrome c oxidase subunit 2 family. Component of the cytochrome c oxidase (complex IV, CIV), a multisubunit enzyme composed of 14 subunits. The complex is composed of a catalytic core of 3 subunits MT-CO1, MT-CO2 and MT-CO3, encoded in the mitochondrial DNA, and 11 supernumerary subunits COX4I, COX5A, COX5B, COX6A, COX6B, COX6C, COX7A, COX7B, COX7C, COX8 and NDUFA4, which are encoded in the nuclear genome. The complex exists as a monomer or a dimer and forms supercomplexes (SCs) in the inner mitochondrial membrane with NADH-ubiquinone oxidoreductase (complex I, CI) and ubiquinol-cytochrome c oxidoreductase (cytochrome b-c1 complex, complex III, CIII), resulting in different assemblies (supercomplex SCI(1)III(2)IV(1) and megacomplex MCI(2)III(2)IV(2)). Found in a complex with TMEM177, COA6, COX18, COX20, SCO1 and SCO2. Interacts with TMEM177 in a COX20-dependent manner. Interacts with COX20. Interacts with COX16. Cu cation serves as cofactor.

Its subcellular location is the mitochondrion inner membrane. It catalyses the reaction 4 Fe(II)-[cytochrome c] + O2 + 8 H(+)(in) = 4 Fe(III)-[cytochrome c] + 2 H2O + 4 H(+)(out). Component of the cytochrome c oxidase, the last enzyme in the mitochondrial electron transport chain which drives oxidative phosphorylation. The respiratory chain contains 3 multisubunit complexes succinate dehydrogenase (complex II, CII), ubiquinol-cytochrome c oxidoreductase (cytochrome b-c1 complex, complex III, CIII) and cytochrome c oxidase (complex IV, CIV), that cooperate to transfer electrons derived from NADH and succinate to molecular oxygen, creating an electrochemical gradient over the inner membrane that drives transmembrane transport and the ATP synthase. Cytochrome c oxidase is the component of the respiratory chain that catalyzes the reduction of oxygen to water. Electrons originating from reduced cytochrome c in the intermembrane space (IMS) are transferred via the dinuclear copper A center (CU(A)) of subunit 2 and heme A of subunit 1 to the active site in subunit 1, a binuclear center (BNC) formed by heme A3 and copper B (CU(B)). The BNC reduces molecular oxygen to 2 water molecules using 4 electrons from cytochrome c in the IMS and 4 protons from the mitochondrial matrix. This chain is Cytochrome c oxidase subunit 2 (mt-co2), found in Polypterus sp. (Bichir).